Reading from the N-terminus, the 127-residue chain is UPF0325 protein VP2321 (127 aa).

It belongs to the UPF0325 family.

The protein is UPF0325 protein VP2321 of Vibrio parahaemolyticus serotype O3:K6 (strain RIMD 2210633).